The sequence spans 806 residues: Leucine--tRNA ligase (806 aa).

The short motif at 40–51 (PYPSGSGLHVGH) is the 'HIGH' region element. Positions 576-580 (KMSKS) match the 'KMSKS' region motif. Lys-579 contributes to the ATP binding site.

The protein belongs to the class-I aminoacyl-tRNA synthetase family.

Its subcellular location is the cytoplasm. It carries out the reaction tRNA(Leu) + L-leucine + ATP = L-leucyl-tRNA(Leu) + AMP + diphosphate. This chain is Leucine--tRNA ligase, found in Chlorobium phaeobacteroides (strain BS1).